Reading from the N-terminus, the 417-residue chain is Tyrosine--tRNA ligase (417 aa).

Residue Tyr-39 participates in L-tyrosine binding. The 'HIGH' region signature appears at 44–53 (CTARSLHIGN). L-tyrosine-binding residues include Tyr-176 and Gln-180. The short motif at 236–240 (KMGKT) is the 'KMSKS' region element. Residue Lys-239 participates in ATP binding. An S4 RNA-binding domain is found at 350–417 (FGVLNAFVKA…KKKHILIKPA (68 aa)).

This sequence belongs to the class-I aminoacyl-tRNA synthetase family. TyrS type 1 subfamily. As to quaternary structure, homodimer.

Its subcellular location is the cytoplasm. The enzyme catalyses tRNA(Tyr) + L-tyrosine + ATP = L-tyrosyl-tRNA(Tyr) + AMP + diphosphate + H(+). Catalyzes the attachment of tyrosine to tRNA(Tyr) in a two-step reaction: tyrosine is first activated by ATP to form Tyr-AMP and then transferred to the acceptor end of tRNA(Tyr). The chain is Tyrosine--tRNA ligase from Bradyrhizobium diazoefficiens (strain JCM 10833 / BCRC 13528 / IAM 13628 / NBRC 14792 / USDA 110).